The sequence spans 399 residues: Serine/threonine-protein kinase PKZ1 (399 aa).

Residues 30–50 are disordered; sequence PMQCAYQTQSHSNPEGAKRGR. The Protein kinase domain occupies 92 to 371; sequence WQLFDQIGAG…ADQMLQHPWM (280 aa). Residues 98-106 and lysine 121 each bind ATP; that span reads IGAGAFGVV. Aspartate 219 (proton acceptor) is an active-site residue.

The protein belongs to the protein kinase superfamily. CAMK Ser/Thr protein kinase family.

The catalysed reaction is L-seryl-[protein] + ATP = O-phospho-L-seryl-[protein] + ADP + H(+). The enzyme catalyses L-threonyl-[protein] + ATP = O-phospho-L-threonyl-[protein] + ADP + H(+). In terms of biological role, may regulate an early stage of the zoospore pathway. The polypeptide is Serine/threonine-protein kinase PKZ1 (Phytophthora infestans (strain T30-4) (Potato late blight agent)).